We begin with the raw amino-acid sequence, 90 residues long: Small ribosomal subunit protein bS16 (90 aa).

It belongs to the bacterial ribosomal protein bS16 family.

In Listeria monocytogenes serotype 4b (strain F2365), this protein is Small ribosomal subunit protein bS16.